The sequence spans 193 residues: Imidazoleglycerol-phosphate dehydratase (193 aa).

The protein belongs to the imidazoleglycerol-phosphate dehydratase family.

It localises to the cytoplasm. The enzyme catalyses D-erythro-1-(imidazol-4-yl)glycerol 3-phosphate = 3-(imidazol-4-yl)-2-oxopropyl phosphate + H2O. The protein operates within amino-acid biosynthesis; L-histidine biosynthesis; L-histidine from 5-phospho-alpha-D-ribose 1-diphosphate: step 6/9. The protein is Imidazoleglycerol-phosphate dehydratase (hisB) of Saccharolobus solfataricus (strain ATCC 35092 / DSM 1617 / JCM 11322 / P2) (Sulfolobus solfataricus).